A 231-amino-acid chain; its full sequence is NADH-ubiquinone oxidoreductase chain 4 (231 aa).

A run of 7 helical transmembrane segments spans residues 1-21 (PIAG…YGII), 34-54 (LFIP…LTCL), 61-80 (SLIA…AVII), 84-106 (WGLS…LFCL), 118-138 (ILIL…WWLL), 156-176 (LLIV…LGLS), and 211-231 (LLMI…ELVI).

The protein belongs to the complex I subunit 4 family.

Its subcellular location is the mitochondrion membrane. The enzyme catalyses a ubiquinone + NADH + 5 H(+)(in) = a ubiquinol + NAD(+) + 4 H(+)(out). Its function is as follows. Core subunit of the mitochondrial membrane respiratory chain NADH dehydrogenase (Complex I) that is believed to belong to the minimal assembly required for catalysis. Complex I functions in the transfer of electrons from NADH to the respiratory chain. The immediate electron acceptor for the enzyme is believed to be ubiquinone. This Hypnale hypnale (Merrem's hump-nosed viper) protein is NADH-ubiquinone oxidoreductase chain 4 (MT-ND4).